The following is a 414-amino-acid chain: ATP-dependent Clp protease ATP-binding subunit ClpX (414 aa).

One can recognise a ClpX-type ZB domain in the interval 1–51; that stretch reads MADSKTKKKCSFCGRSENEVGFLITGMNGYICDSCATQAYEITQEALGEGR. Zn(2+) contacts are provided by C10, C13, C32, and C35. ATP is bound at residue 120–127; sequence STGTGKTL.

It belongs to the ClpX chaperone family. In terms of assembly, component of the ClpX-ClpP complex. Forms a hexameric ring that, in the presence of ATP, binds to fourteen ClpP subunits assembled into a disk-like structure with a central cavity, resembling the structure of eukaryotic proteasomes.

Its function is as follows. ATP-dependent specificity component of the Clp protease. It directs the protease to specific substrates. Can perform chaperone functions in the absence of ClpP. This chain is ATP-dependent Clp protease ATP-binding subunit ClpX, found in Bacteroides thetaiotaomicron (strain ATCC 29148 / DSM 2079 / JCM 5827 / CCUG 10774 / NCTC 10582 / VPI-5482 / E50).